The following is a 141-amino-acid chain: Small ribosomal subunit protein bS6 (141 aa).

The interval 97–141 (TGQSEMLKAEENRSERRERRDRPEHSDSADGDDGDNSDVSDNADE) is disordered. Positions 103–124 (LKAEENRSERRERRDRPEHSDS) are enriched in basic and acidic residues. Acidic residues predominate over residues 125-141 (ADGDDGDNSDVSDNADE).

This sequence belongs to the bacterial ribosomal protein bS6 family.

Functionally, binds together with bS18 to 16S ribosomal RNA. This Pseudomonas syringae pv. syringae (strain B728a) protein is Small ribosomal subunit protein bS6.